The following is a 292-amino-acid chain: Coiled-coil domain-containing protein 192 (292 aa).

The interval 28-55 (SVVPESDTSERSSMTSGSSESDIPQENK) is disordered. The span at 38–49 (RSSMTSGSSESD) shows a compositional bias: low complexity. Coiled-coil stretches lie at residues 65–174 (QMAF…LATA) and 222–258 (IMELSTQVSLQTERITQLKEVLEEKERKIQQLEAERS). The segment covering 251–267 (QQLEAERSPHPPQEVKD) has biased composition (basic and acidic residues). The disordered stretch occupies residues 251–292 (QQLEAERSPHPPQEVKDPPGCLPEAPVFSTHDIPPVVSDENL).

The chain is Coiled-coil domain-containing protein 192 from Homo sapiens (Human).